The following is a 383-amino-acid chain: Putative F-box protein At3g22650 (383 aa).

Positions 3–50 constitute an F-box domain; that stretch reads SCERSLLPIDIIEEICCRIPVEYLTQFKLTCKQWFALLKDKRFIYKYL.

The polypeptide is Putative F-box protein At3g22650 (Arabidopsis thaliana (Mouse-ear cress)).